The sequence spans 510 residues: Probable inositol 3-phosphate synthase isozyme 3 (510 aa).

This sequence belongs to the myo-inositol 1-phosphate synthase family. NAD(+) is required as a cofactor. Expressed in siliques, leaves, roots, seed endosperm, but not in embryos. Highest expression in roots. Confined to vascular tissue and hydathodes of leaves.

Its subcellular location is the cytoplasm. It carries out the reaction D-glucose 6-phosphate = 1D-myo-inositol 3-phosphate. Its pathway is polyol metabolism; myo-inositol biosynthesis; myo-inositol from D-glucose 6-phosphate: step 1/2. In terms of biological role, key enzyme in myo-inositol biosynthesis pathway that catalyzes the conversion of glucose 6-phosphate to 1-myo-inositol 1-phosphate in a NAD-dependent manner. The polypeptide is Probable inositol 3-phosphate synthase isozyme 3 (IPS3) (Arabidopsis thaliana (Mouse-ear cress)).